Here is a 351-residue protein sequence, read N- to C-terminus: Circumsporozoite protein (351 aa).

Positions 1–22 (MKNFILLAVSSILLVDLLPTHF) are cleaved as a signal peptide. Positions 50-266 (AQVRQSASRG…GQNNQGANVP (217 aa)) are disordered. Residues 61-96 (GLGEKPKEGADKEKKKEKEKEKEEEPKKPNENKLKQ) are compositionally biased toward basic and acidic residues. Residues 80–88 (KEKEEEPKK) are required for the binding to heparan sulfate proteoglycans (HSPGs) on the surface of host hepatocytes. Positions 93–97 (KLKQP) are region I; contains the proteolytic cleavage site. Residues 97–219 (PEQPAAGAGG…AGARGEQPAA (123 aa)) show a composition bias toward low complexity. 14 tandem repeats follow at residues 101–109 (AAGAGGEQP), 110–118 (AAGAGGEQP), 119–127 (AAGAGGEQP), 128–136 (AAGARGEQP), 137–145 (AAGAGGEQP), 146–154 (AAGAGGEQP), 155–163 (AAGAGGEQP), 164–172 (AAGAGGEQP), 173–181 (AAGAGGEQP), 182–190 (AAGARGEQP), 191–199 (AAGAGGEQP), 200–208 (AAGAGGEQP), 209–217 (AAGARGEQP), and 218–226 (AAGAGGEQP). The interval 101 to 226 (AAGAGGEQPA…PAAGAGGEQP (126 aa)) is 14 X 9 AA tandem repeats of A-A-G-A-[GR]-G-E-Q-P. The span at 244–256 (GARGGNAGAGKGQ) shows a compositional bias: gly residues. Positions 277–329 (KIRSSVTTEWTPCSVTCGNGVRIRRKGHAGNKKAEDLTMDDLEVEACVMDKCA) constitute a TSP type-1 domain. 2 cysteine pairs are disulfide-bonded: cysteine 289–cysteine 323 and cysteine 293–cysteine 328. A glycan (O-linked (Fuc) threonine) is linked at threonine 292. Cysteine 328 carries the GPI-anchor amidated cysteine lipid modification. A propeptide spans 329 to 351 (AGIFNVVSNSLGLVILLVLALFN) (removed in mature form).

This sequence belongs to the plasmodium circumsporozoite protein family. In terms of processing, during host cell invasion, proteolytically cleaved at the cell membrane in the region I by a papain-like cysteine protease of parasite origin. Cleavage is triggered by the sporozoite contact with highly sulfated heparan sulfate proteoglycans (HSPGs) present on the host hepatocyte cell surface. Cleavage exposes the TSP type-1 (TSR) domain and is required for productive invasion of host hepatocytes but not for adhesion to the host cell membrane. Cleavage is dispensable for sporozoite development in the oocyst, motility and for traversal of host and vector cells. Post-translationally, O-glycosylated; maybe by POFUT2.

The protein resides in the cell membrane. The protein localises to the cytoplasm. In terms of biological role, essential sporozoite protein. In the mosquito vector, required for sporozoite development in the oocyst, migration through the vector hemolymph and entry into the vector salivary glands. In the vertebrate host, required for sporozoite migration through the host dermis and infection of host hepatocytes. Binds to highly sulfated heparan sulfate proteoglycans (HSPGs) on the surface of host hepatocytes. In the vertebrate host, binds to highly sulfated heparan sulfate proteoglycans (HSPGs) on the surface of host hepatocytes and is required for sporozoite invasion of the host hepatocytes. The protein is Circumsporozoite protein of Plasmodium knowlesi (strain nuri).